The primary structure comprises 600 residues: Baculoviral IAP repeat-containing protein 3 (600 aa).

One copy of the BIR 1 repeat lies at 27-94 (ELYRLSTYSA…RKLYPSCNFV (68 aa)). Position 138 is a phosphoserine (S138). BIR repeat units lie at residues 167–233 (EKAR…CPFL) and 253–320 (HAAR…CEYL). Zn(2+) is bound by residues C290, C293, H310, and C317. In terms of domain architecture, CARD spans 436 to 525 (EESDDLALIR…ALYRDIFVQQ (90 aa)). The segment at 553–588 (CKVCMDREVSIVFIPCGHLVVCKDCAPSLRKCPICR) adopts an RING-type zinc-finger fold.

Belongs to the IAP family. As to quaternary structure, interacts with PRSS25; the interaction inhibits apoptotic suppressor activity. The BIR motifs region interacts with TNF receptor associated factors 1 and 2 (TRAF1 and TRAF2) to form a heteromeric complex, which is then recruited to the tumor necrosis factor receptor 2 (TNFR2). Interaction with TRAF2 is required for ubiquitination of IKBKE, degradation of NFKBIA and activation of NF-kappa-B. Interacts with RIP1, RIP2, RIP3, RIP4 and USP19. Auto-ubiquitinated and degraded by the proteasome in apoptotic cells.

The protein resides in the cytoplasm. It localises to the nucleus. It catalyses the reaction S-ubiquitinyl-[E2 ubiquitin-conjugating enzyme]-L-cysteine + [acceptor protein]-L-lysine = [E2 ubiquitin-conjugating enzyme]-L-cysteine + N(6)-ubiquitinyl-[acceptor protein]-L-lysine.. USP19 regulates the stability of BIRC3/c-IAP2 by preventing its ubiquitination. Multi-functional protein which regulates not only caspases and apoptosis, but also modulates inflammatory signaling and immunity, mitogenic kinase signaling and cell proliferation, as well as cell invasion and metastasis. Acts as an E3 ubiquitin-protein ligase regulating NF-kappa-B signaling and regulates both canonical and non-canonical NF-kappa-B signaling by acting in opposite directions: acts as a positive regulator of the canonical pathway and suppresses constitutive activation of non-canonical NF-kappa-B signaling. The target proteins for its E3 ubiquitin-protein ligase activity include: RIPK1, RIPK2, RIPK3, RIPK4, CASP3, CASP7, CASP8, IKBKE, TRAF1, and BCL10. Acts as an important regulator of innate immune signaling via regulation of Toll-like receptors (TLRs), Nodlike receptors (NLRs) and RIG-I like receptors (RLRs), collectively referred to as pattern recognition receptors (PRRs). Protects cells from spontaneous formation of the ripoptosome, a large multi-protein complex that has the capability to kill cancer cells in a caspase-dependent and caspase-independent manner. Suppresses ripoptosome formation by ubiquitinating RIPK1 and CASP8. The chain is Baculoviral IAP repeat-containing protein 3 (Birc3) from Mus musculus (Mouse).